A 124-amino-acid chain; its full sequence is Small ribosomal subunit protein uS13 (124 aa).

Positions 99–124 (RGQRTRTNARTRKGPRKTVGVMRKKS) are disordered. The segment covering 101–124 (QRTRTNARTRKGPRKTVGVMRKKS) has biased composition (basic residues).

This sequence belongs to the universal ribosomal protein uS13 family. In terms of assembly, part of the 30S ribosomal subunit. Forms a loose heterodimer with protein S19. Forms two bridges to the 50S subunit in the 70S ribosome.

In terms of biological role, located at the top of the head of the 30S subunit, it contacts several helices of the 16S rRNA. In the 70S ribosome it contacts the 23S rRNA (bridge B1a) and protein L5 of the 50S subunit (bridge B1b), connecting the 2 subunits; these bridges are implicated in subunit movement. Contacts the tRNAs in the A and P-sites. The sequence is that of Small ribosomal subunit protein uS13 from Caldicellulosiruptor saccharolyticus (strain ATCC 43494 / DSM 8903 / Tp8T 6331).